The primary structure comprises 218 residues: uncharacterized protein (218 aa).

This sequence belongs to the glycosyltransferase 2 family.

This is an uncharacterized protein from Mycobacterium bovis (strain ATCC BAA-935 / AF2122/97).